A 217-amino-acid polypeptide reads, in one-letter code: IMPACT family member YvyE (217 aa).

It belongs to the IMPACT family.

This chain is IMPACT family member YvyE (yvyE), found in Bacillus subtilis (strain 168).